A 573-amino-acid polypeptide reads, in one-letter code: 60 kDa heat shock protein, mitochondrial (573 aa).

The transit peptide at 1-26 (MLRLPTVLRQMRPVSRALAPHLTRAY) directs the protein to the mitochondrion. Lysine 31 carries the N6-succinyllysine modification. Phosphoserine occurs at positions 67 and 70. Lysine 75 provides a ligand contact to ATP. At lysine 75 the chain carries N6-acetyllysine. Residue lysine 82 is modified to N6-acetyllysine; alternate. Lysine 82 carries the post-translational modification N6-succinyllysine; alternate. Residue lysine 87 is modified to N6-acetyllysine. At tyrosine 90 the chain carries Phosphotyrosine. N6-acetyllysine is present on lysine 91. Residue 111–115 (DGTTT) participates in ATP binding. Lysine 125 carries the N6-acetyllysine; alternate modification. Lysine 125 carries the N6-succinyllysine; alternate modification. Lysine 130 is modified (N6-acetyllysine). At lysine 133 the chain carries N6-acetyllysine; alternate. Position 133 is an N6-succinyllysine; alternate (lysine 133). N6-malonyllysine; alternate is present on lysine 133. Position 156 is an N6-acetyllysine (lysine 156). Residues lysine 191, lysine 202, lysine 205, lysine 218, and lysine 236 each carry the N6-acetyllysine; alternate modification. Residues lysine 191, lysine 202, lysine 205, lysine 218, and lysine 236 each carry the N6-succinyllysine; alternate modification. Residue lysine 249 is modified to N6-acetyllysine. Lysine 250 is subject to N6-acetyllysine; alternate. Lysine 250 bears the N6-succinyllysine; alternate mark. Residues lysine 269 and lysine 292 each carry the N6-acetyllysine modification. Lysine 301 is subject to N6-succinyllysine. At lysine 314 the chain carries N6-acetyllysine. Lysine 352 is subject to N6-acetyllysine; alternate. Lysine 352 carries the N6-succinyllysine; alternate modification. An N6-acetyllysine mark is found at lysine 359 and lysine 389. Lysine 396 bears the N6-acetyllysine; alternate mark. An N6-succinyllysine; alternate modification is found at lysine 396. Serine 410 bears the Phosphoserine mark. Glycine 440 provides a ligand contact to ATP. Lysine 455 is modified (N6-acetyllysine; alternate). Position 455 is an N6-succinyllysine; alternate (lysine 455). Lysine 469 carries the N6-acetyllysine modification. Residue lysine 481 is modified to N6-acetyllysine; alternate. At lysine 481 the chain carries N6-succinyllysine; alternate. Serine 488 carries the phosphoserine modification. Aspartate 520 is a binding site for ATP. Lysine 551 is covalently cross-linked (Glycyl lysine isopeptide (Lys-Gly) (interchain with G-Cter in SUMO2)).

This sequence belongs to the chaperonin (HSP60) family. Homoheptamer arranged in a ring structure. The functional units of these chaperonins consist of heptameric rings of the large subunit Hsp60, which function as a back-to-back double ring. Interacts with 2 heptameric Hsp10 rings to form the symmetrical football complex. Interacts with HRAS. Interacts with ATAD3A. Interacts with ETFBKMT and EEF1AKMT3. Interacts with MFHAS1.

The protein localises to the mitochondrion matrix. The enzyme catalyses ATP + H2O + a folded polypeptide = ADP + phosphate + an unfolded polypeptide.. Its function is as follows. Chaperonin implicated in mitochondrial protein import and macromolecular assembly. Together with Hsp10, facilitates the correct folding of imported proteins. May also prevent misfolding and promote the refolding and proper assembly of unfolded polypeptides generated under stress conditions in the mitochondrial matrix. The functional units of these chaperonins consist of heptameric rings of the large subunit Hsp60, which function as a back-to-back double ring. In a cyclic reaction, Hsp60 ring complexes bind one unfolded substrate protein per ring, followed by the binding of ATP and association with 2 heptameric rings of the co-chaperonin Hsp10. This leads to sequestration of the substrate protein in the inner cavity of Hsp60 where, for a certain period of time, it can fold undisturbed by other cell components. Synchronous hydrolysis of ATP in all Hsp60 subunits results in the dissociation of the chaperonin rings and the release of ADP and the folded substrate protein. This Cricetulus griseus (Chinese hamster) protein is 60 kDa heat shock protein, mitochondrial (HSPD1).